A 453-amino-acid polypeptide reads, in one-letter code: MALPNKFFLWFCCFAWLCFPISLDSLPSRGEAQIVARTALESEAETWSLLNHLGGRHRPGLLSPLLEVLYDGHGEPPRLQPDDRALRYMKRLYKAYATKEGTPKSNRRHLYNTVRLFTPCAQHKQAPGDLAAGTFPSVDLLFNLDRVTVVEHLFKSVLLYTFNNSISFPFPVKCICNLVIKEPEFSSKTLPRAPYSFTYNSQFEFRKKYKWMEIDVTAPLEPLVASHKRNIHMSVNFTCAEDQLQHPSARDSLFNMTLLVAPSLLLYLNDTSAQAFHRWHSLHPKRKPSQGPDQKRGLSAYPVGEEAAEGVRSSRHRRDQESASSELKKPLVPASVNLSEYFKQFLFPQNECELHDFRLSFSQLKWDNWIVAPHKYNPRYCKGDCPRAVGHRYGSPVHTMVQNIIHEKLDSSVPRPSCVPAKYSPLSVLAIEPDGSIAYKEYEDMIATKCTCR.

The signal sequence occupies residues 1–27; that stretch reads MALPNKFFLWFCCFAWLCFPISLDSLP. Residues 28-318 constitute a propeptide that is removed on maturation; that stretch reads SRGEAQIVAR…EGVRSSRHRR (291 aa). N-linked (GlcNAc...) asparagine glycans are attached at residues asparagine 163, asparagine 236, asparagine 255, and asparagine 269. The disordered stretch occupies residues 304–328; the sequence is GEEAAEGVRSSRHRRDQESASSELK. A compositionally biased stretch (basic and acidic residues) spans 318–328; it reads RDQESASSELK. A glycan (N-linked (GlcNAc...) asparagine) is linked at asparagine 337. 3 disulfides stabilise this stretch: cysteine 352–cysteine 418, cysteine 381–cysteine 450, and cysteine 385–cysteine 452.

This sequence belongs to the TGF-beta family. As to quaternary structure, homodimer or heterodimer (Potential). But, in contrast to other members of this family, cannot be disulfide-linked. Phosphorylated; phosphorylation is critical for GDF9 function.

Its subcellular location is the secreted. In terms of biological role, required for ovarian folliculogenesis. This is Growth/differentiation factor 9 (GDF9) from Ovis aries (Sheep).